A 694-amino-acid chain; its full sequence is Scarecrow-like protein 33 (694 aa).

Residues 289–313 form a disordered region; the sequence is PAKASTFSKSPKGEKPEASGNSYTK. One can recognise a GRAS domain in the interval 309–692; sequence NSYTKETPDL…RIVYGSSIWV (384 aa). Residues 316 to 376 form a leucine repeat I (LRI) region; sequence PDLRTMLVSC…EARLAGIGTQ (61 aa). The VHIID stretch occupies residues 395–462; that stretch reads YQTYISVCPF…GSSCKLRITG (68 aa). The VHIID motif lies at 428 to 432; that stretch reads IHIID. A leucine repeat II (LRII) region spans residues 478–510; it reads ETGRRLAKYCQKFNIPFEYNAIAQKWESIKLED. Residues 519 to 613 form a PFYRE region; that stretch reads VAVNSLFRFR…KEFYGREIMN (95 aa). The tract at residues 616–692 is SAW; it reads ACEGTERVER…RIVYGSSIWV (77 aa).

The protein belongs to the GRAS family. As to quaternary structure, interacts with SNRNP35.

It is found in the nucleus. Probable transcription factor involved in plant development. This chain is Scarecrow-like protein 33 (SCL33), found in Arabidopsis thaliana (Mouse-ear cress).